The following is a 1444-amino-acid chain: Chromatin-remodeling ATPase INO80 (1444 aa).

Disordered regions lie at residues 1–115 (MSFA…SPRK), 215–238 (QDEK…RLEM), 269–384 (RKIK…APLS), 432–454 (ASKQ…QARA), and 524–551 (AEGD…HAME). The span at 29 to 41 (APVTSTPREATQL) shows a compositional bias: polar residues. Residues 55 to 85 (KVKEQEQVLPRLEKKPSSEKRRRNAEQDNKA) show a composition bias toward basic and acidic residues. The segment covering 101–110 (TKTTTQSWSF) has biased composition (polar residues). Residues 207 to 283 (SEVQAKEIQD…TKRALEGVTA (77 aa)) are a coiled coil. 3 stretches are compositionally biased toward basic and acidic residues: residues 329 to 340 (SKEQKQAEKDAA), 357 to 377 (PKED…RSKE), and 438 to 452 (KWQE…DTQA). The region spanning 398–523 (IWRDIARKDI…SHFIGRKIKG (126 aa)) is the DBINO domain. Residues 440–511 (QERTNKSMKD…KLNFLISQTE (72 aa)) adopt a coiled-coil conformation. Residues 645 to 817 (VNLYEQGING…WALLHFIMPT (173 aa)) form the Helicase ATP-binding domain. 658–665 (DEMGLGKT) contributes to the ATP binding site. The short motif at 768 to 771 (DEAQ) is the DEAQ box element. The Helicase C-terminal domain maps to 1220 to 1380 (KLDELLRELK…GVDFNTRNRE (161 aa)).

The protein belongs to the SNF2/RAD54 helicase family. As to quaternary structure, component of the INO80 chromatin-remodeling complex.

The protein localises to the nucleus. The catalysed reaction is ATP + H2O = ADP + phosphate + H(+). In terms of biological role, ATPase component of the INO80 complex which remodels chromatin by shifting nucleosomes and is involved in DNA repair. The polypeptide is Chromatin-remodeling ATPase INO80 (ino80) (Aspergillus oryzae (strain ATCC 42149 / RIB 40) (Yellow koji mold)).